Here is a 231-residue protein sequence, read N- to C-terminus: Endonuclease NucS (231 aa).

It belongs to the NucS endonuclease family.

Its subcellular location is the cytoplasm. In terms of biological role, cleaves both 3' and 5' ssDNA extremities of branched DNA structures. In Beutenbergia cavernae (strain ATCC BAA-8 / DSM 12333 / CCUG 43141 / JCM 11478 / NBRC 16432 / NCIMB 13614 / HKI 0122), this protein is Endonuclease NucS.